The following is a 307-amino-acid chain: Aspartate carbamoyltransferase catalytic subunit (307 aa).

The carbamoyl phosphate site is built by R54 and T55. L-aspartate is bound at residue K83. R104, H132, and Q135 together coordinate carbamoyl phosphate. R165 and R228 together coordinate L-aspartate. Residues L267 and P268 each coordinate carbamoyl phosphate.

It belongs to the aspartate/ornithine carbamoyltransferase superfamily. ATCase family. As to quaternary structure, heterododecamer (2C3:3R2) of six catalytic PyrB chains organized as two trimers (C3), and six regulatory PyrI chains organized as three dimers (R2).

The catalysed reaction is carbamoyl phosphate + L-aspartate = N-carbamoyl-L-aspartate + phosphate + H(+). It functions in the pathway pyrimidine metabolism; UMP biosynthesis via de novo pathway; (S)-dihydroorotate from bicarbonate: step 2/3. Its function is as follows. Catalyzes the condensation of carbamoyl phosphate and aspartate to form carbamoyl aspartate and inorganic phosphate, the committed step in the de novo pyrimidine nucleotide biosynthesis pathway. The chain is Aspartate carbamoyltransferase catalytic subunit from Clostridium botulinum (strain Loch Maree / Type A3).